The chain runs to 471 residues: Cell division protein FtsP (471 aa).

A signal peptide (tat-type signal) is located at residues 1-27 (MSLSRRSFLQASGVALAAGALPLKAEA). One can recognise a Plastocyanin-like domain in the interval 229–288 (VRLRLLNASNARRYELSMTDNRAFHVVASDLGFLPAPMTVKRLSLGPGERREVLVDMSQG).

Belongs to the FtsP family. Post-translationally, predicted to be exported by the Tat system. The position of the signal peptide cleavage has not been experimentally proven.

It is found in the periplasm. Functionally, cell division protein that is required for growth during stress conditions. May be involved in protecting or stabilizing the divisomal assembly under conditions of stress. The protein is Cell division protein FtsP of Rahnella sp. (strain Y9602).